The chain runs to 469 residues: 3-isopropylmalate dehydratase large subunit (469 aa).

C347, C408, and C411 together coordinate [4Fe-4S] cluster.

Belongs to the aconitase/IPM isomerase family. LeuC type 1 subfamily. Heterodimer of LeuC and LeuD. The cofactor is [4Fe-4S] cluster.

The enzyme catalyses (2R,3S)-3-isopropylmalate = (2S)-2-isopropylmalate. Its pathway is amino-acid biosynthesis; L-leucine biosynthesis; L-leucine from 3-methyl-2-oxobutanoate: step 2/4. Catalyzes the isomerization between 2-isopropylmalate and 3-isopropylmalate, via the formation of 2-isopropylmaleate. This chain is 3-isopropylmalate dehydratase large subunit, found in Haemophilus influenzae (strain ATCC 51907 / DSM 11121 / KW20 / Rd).